We begin with the raw amino-acid sequence, 303 residues long: tRNA dimethylallyltransferase 1 (303 aa).

17-24 (GPTACGKT) contributes to the ATP binding site. 19–24 (TACGKT) lines the substrate pocket. The segment at 42 to 45 (DSRQ) is interaction with substrate tRNA.

The protein belongs to the IPP transferase family. As to quaternary structure, monomer. Mg(2+) serves as cofactor.

The catalysed reaction is adenosine(37) in tRNA + dimethylallyl diphosphate = N(6)-dimethylallyladenosine(37) in tRNA + diphosphate. In terms of biological role, catalyzes the transfer of a dimethylallyl group onto the adenine at position 37 in tRNAs that read codons beginning with uridine, leading to the formation of N6-(dimethylallyl)adenosine (i(6)A). The protein is tRNA dimethylallyltransferase 1 of Hahella chejuensis (strain KCTC 2396).